A 955-amino-acid polypeptide reads, in one-letter code: Mediator of RNA polymerase II transcription subunit 16 (955 aa).

This sequence belongs to the Mediator complex subunit 16 family. Component of the Mediator complex.

Its subcellular location is the nucleus. Functionally, component of the Mediator complex, a coactivator involved in the regulated transcription of nearly all RNA polymerase II-dependent genes. Mediator functions as a bridge to convey information from gene-specific regulatory proteins to the basal RNA polymerase II transcription machinery. Mediator is recruited to promoters by direct interactions with regulatory proteins and serves as a scaffold for the assembly of a functional preinitiation complex with RNA polymerase II and the general transcription factors. This is Mediator of RNA polymerase II transcription subunit 16 (sin4) from Neosartorya fischeri (strain ATCC 1020 / DSM 3700 / CBS 544.65 / FGSC A1164 / JCM 1740 / NRRL 181 / WB 181) (Aspergillus fischerianus).